We begin with the raw amino-acid sequence, 295 residues long: Ribosomal RNA small subunit methyltransferase A (295 aa).

S-adenosyl-L-methionine is bound by residues Asn-29, Leu-31, Gly-56, Glu-77, Asp-102, and Asn-128.

The protein belongs to the class I-like SAM-binding methyltransferase superfamily. rRNA adenine N(6)-methyltransferase family. RsmA subfamily.

It is found in the cytoplasm. It carries out the reaction adenosine(1518)/adenosine(1519) in 16S rRNA + 4 S-adenosyl-L-methionine = N(6)-dimethyladenosine(1518)/N(6)-dimethyladenosine(1519) in 16S rRNA + 4 S-adenosyl-L-homocysteine + 4 H(+). In terms of biological role, specifically dimethylates two adjacent adenosines (A1518 and A1519) in the loop of a conserved hairpin near the 3'-end of 16S rRNA in the 30S particle. May play a critical role in biogenesis of 30S subunits. The protein is Ribosomal RNA small subunit methyltransferase A of Listeria monocytogenes serovar 1/2a (strain ATCC BAA-679 / EGD-e).